Here is a 341-residue protein sequence, read N- to C-terminus: tRNA N6-adenosine threonylcarbamoyltransferase (341 aa).

Residues H112 and H116 each coordinate Fe cation. Residues 138-142 (TVSGG), D171, G184, D188, and N279 each bind substrate. Residue D307 participates in Fe cation binding.

The protein belongs to the KAE1 / TsaD family. Requires Fe(2+) as cofactor.

The protein resides in the cytoplasm. The catalysed reaction is L-threonylcarbamoyladenylate + adenosine(37) in tRNA = N(6)-L-threonylcarbamoyladenosine(37) in tRNA + AMP + H(+). Functionally, required for the formation of a threonylcarbamoyl group on adenosine at position 37 (t(6)A37) in tRNAs that read codons beginning with adenine. Is involved in the transfer of the threonylcarbamoyl moiety of threonylcarbamoyl-AMP (TC-AMP) to the N6 group of A37, together with TsaE and TsaB. TsaD likely plays a direct catalytic role in this reaction. In Riemerella anatipestifer (Moraxella anatipestifer), this protein is tRNA N6-adenosine threonylcarbamoyltransferase.